The chain runs to 895 residues: Glutamate receptor 2.3 (895 aa).

A signal peptide spans 1 to 23 (MRTEKLFFCILLVFFFCLEFNRG). Over 24–582 (QNNGKTLVDV…ILFMKPLSWK (559 aa)) the chain is Extracellular. N-linked (GlcNAc...) asparagine glycosylation is found at Asn52, Asn203, Asn266, Asn330, Asn342, Asn477, and Asn542. The chain crosses the membrane as a helical span at residues 583–603 (LWLTSFISFFLVGCTVWVLEY). Topologically, residues 604–610 (KRNPDFS) are cytoplasmic. Residues 611 to 631 (GPPRFQASTICWFAFSTMVFA) traverse the membrane as a helical segment. The Cytoplasmic portion of the chain corresponds to 632-635 (PRER). Residues 636–656 (VFSFWARALVIAWYFLVLVLT) traverse the membrane as a helical segment. Topologically, residues 657–830 (QSYTASLASL…FTSRQLDIDS (174 aa)) are extracellular. The helical transmembrane segment at 831–851 (FLFLFVGVLLVCVMALGNFTY) threads the bilayer. The Cytoplasmic portion of the chain corresponds to 852–895 (CFLAKDQVSYLDKVEMSPCSSSQQMPVKRKTQLNMSQVHDQDSL). The segment at 873 to 895 (SQQMPVKRKTQLNMSQVHDQDSL) is disordered.

Belongs to the glutamate-gated ion channel (TC 1.A.10.1) family. May form heteromers. As to expression, expressed predominantly in roots.

The protein localises to the membrane. In terms of biological role, glutamate-gated receptor that probably acts as a non-selective cation channel. May be involved in light-signal transduction and calcium homeostasis via the regulation of calcium influx into cells. This is Glutamate receptor 2.3 (GLR2.3) from Arabidopsis thaliana (Mouse-ear cress).